The primary structure comprises 525 residues: Matrix extracellular phosphoglycoprotein (525 aa).

A signal peptide spans 1–17 (MRVFCVGLLLFSVTWAA). 3 disordered regions span residues 24–95 (TEKT…NRQR), 187–216 (AKAH…THRI), and 237–525 (EGSG…SDGD). 2 stretches are compositionally biased toward basic and acidic residues: residues 25 to 46 (EKTK…DNIG) and 64 to 73 (IVQERKKDLS). Polar residues-rich tracts occupy residues 75-95 (SEAS…NRQR) and 200-210 (DSQAQKSPVKS). Residues 242 to 264 (TDLQERGDNDISPFSGDGQPFKD) are dentonin. Positions 247–249 (RGD) match the Cell attachment site motif. Serine 256 carries an O-linked (Xyl...) (chondroitin sulfate) serine glycan. Basic and acidic residues-rich tracts occupy residues 292–312 (ESTH…REEN) and 319–328 (TRDETAKEAD). Asparagine 477 and asparagine 478 each carry an N-linked (GlcNAc...) asparagine glycan. Positions 507–525 (RDDSSESSDSGSSSESDGD) are ASARM motif; interaction with PHEX. The span at 513 to 525 (SSDSGSSSESDGD) shows a compositional bias: low complexity.

The protein belongs to the PF07175/osteoregulin family. In terms of assembly, interacts (via the ASARM motif) with PHEX; the interaction is zinc-dependent. In terms of processing, phosphorylated on serine residues in the ASARM motif (in vitro) by FAM20C; the phosphorylation is important for the inhibition of bone mineralization. Post-translationally, cleaved by CTSB/cathepsin B; the cleavage is blocked by metalloprotease PHEX. Detected in urine (at protein level). Expressed by osteoblasts. Expressed by stem cells in dental pulp. Expressed by mesenchymal cells in dental papilla and dental pulp. Expressed in teeth, specifically in decidious dentin. Expressed in ondotoblasts. Expressed in salivary glands. Secreted from oncogenic hypophosphatemic tumors.

Its subcellular location is the secreted. It is found in the extracellular space. The protein resides in the extracellular matrix. Its function is as follows. Promotes renal phosphate excretion and inhibits intestinal phosphate absorption. Promotes bone mineralization by osteoblasts and cartilage mineralization by chondrocytes. Regulates the mineralization of the extracellular matrix of the craniofacial complex, such as teeth, bone and cartilage. Promotes dental pulp stem cell proliferation and differentiation. The polypeptide is Matrix extracellular phosphoglycoprotein (MEPE) (Homo sapiens (Human)).